A 226-amino-acid chain; its full sequence is Isoprenyl transferase (226 aa).

Asp12 is an active-site residue. Position 12 (Asp12) interacts with Mg(2+). Substrate-binding positions include 13–16, Trp17, Lys25, His29, and 57–59; these read GNAR and SSE. The active-site Proton acceptor is the Asn60. Substrate is bound by residues Trp61, Arg63, Arg174, and 180 to 182; that span reads RIS. Glu193 provides a ligand contact to Mg(2+).

This sequence belongs to the UPP synthase family. Homodimer. It depends on Mg(2+) as a cofactor.

Functionally, catalyzes the condensation of isopentenyl diphosphate (IPP) with allylic pyrophosphates generating different type of terpenoids. This chain is Isoprenyl transferase, found in Rickettsia typhi (strain ATCC VR-144 / Wilmington).